A 460-amino-acid polypeptide reads, in one-letter code: Elongation factor 1-alpha (460 aa).

Position 2 is a n,N,N-trimethylglycine (G2). N6,N6-dimethyllysine; alternate is present on K3. K3 carries the N6-methyllysine; alternate modification. The tr-type G domain occupies 6-241 (KTHINVVVIG…DSIEPPKRPT (236 aa)). The G1 stretch occupies residues 15-22 (GHVDSGKS). 15 to 22 (GHVDSGKS) serves as a coordination point for GTP. Residues 71–75 (GITID) are G2. The residue at position 80 (K80) is an N6,N6,N6-trimethyllysine. The interval 92 to 95 (DAPG) is G3. GTP contacts are provided by residues 92–96 (DAPGH) and 154–157 (NKMD). The G4 stretch occupies residues 154 to 157 (NKMD). The segment at 193 to 195 (SGF) is G5. K317 bears the N6,N6-dimethyllysine; alternate mark. Position 317 is an N6-methyllysine; alternate (K317). At K391 the chain carries N6-methyllysine.

The protein belongs to the TRAFAC class translation factor GTPase superfamily. Classic translation factor GTPase family. EF-Tu/EF-1A subfamily.

The protein localises to the cytoplasm. This protein promotes the GTP-dependent binding of aminoacyl-tRNA to the A-site of ribosomes during protein biosynthesis. This is Elongation factor 1-alpha (tef1) from Hypocrea jecorina (Trichoderma reesei).